Consider the following 218-residue polypeptide: Pyridoxine/pyridoxamine 5'-phosphate oxidase (218 aa).

Residues 14–17 (RREY) and lysine 72 contribute to the substrate site. Residues 67-72 (RIVLLK), 82-83 (YT), arginine 88, lysine 89, and glutamine 111 each bind FMN. Residues tyrosine 129, arginine 133, and serine 137 each contribute to the substrate site. FMN contacts are provided by residues 146–147 (QS) and tryptophan 191. 197–199 (RLH) provides a ligand contact to substrate. Arginine 201 is an FMN binding site.

It belongs to the pyridoxamine 5'-phosphate oxidase family. In terms of assembly, homodimer. The cofactor is FMN.

The enzyme catalyses pyridoxamine 5'-phosphate + O2 + H2O = pyridoxal 5'-phosphate + H2O2 + NH4(+). It carries out the reaction pyridoxine 5'-phosphate + O2 = pyridoxal 5'-phosphate + H2O2. Its pathway is cofactor metabolism; pyridoxal 5'-phosphate salvage; pyridoxal 5'-phosphate from pyridoxamine 5'-phosphate: step 1/1. The protein operates within cofactor metabolism; pyridoxal 5'-phosphate salvage; pyridoxal 5'-phosphate from pyridoxine 5'-phosphate: step 1/1. In terms of biological role, catalyzes the oxidation of either pyridoxine 5'-phosphate (PNP) or pyridoxamine 5'-phosphate (PMP) into pyridoxal 5'-phosphate (PLP). This is Pyridoxine/pyridoxamine 5'-phosphate oxidase from Salmonella paratyphi B (strain ATCC BAA-1250 / SPB7).